The sequence spans 574 residues: Egalitarian protein homolog (574 aa).

The tract at residues 259 to 278 (LNEDGSENGSDEGEETNNNG) is disordered. The span at 262–273 (DGSENGSDEGEE) shows a compositional bias: acidic residues. The 103-residue stretch at 312 to 414 (NMEKKVVGLD…SLLQHEKFNK (103 aa)) folds into the 3'-5' exonuclease domain.

As to quaternary structure, component of a dynein-regulating complex composed of at least bicd-1, dlc-1 and egal-1.

It localises to the nucleus envelope. In terms of biological role, part of a complex with bicd-1 and dlc-1, which is recruited to the nuclear envelope by unc-83, where in turn, it recruits dynein to the nuclear surface and regulates nuclear migration in hypodermal precursor cells. This is Egalitarian protein homolog from Caenorhabditis elegans.